Consider the following 875-residue polypeptide: Alanine--tRNA ligase (875 aa).

Residues H563, H567, C665, and H669 each coordinate Zn(2+).

It belongs to the class-II aminoacyl-tRNA synthetase family. Zn(2+) serves as cofactor.

The protein localises to the cytoplasm. The enzyme catalyses tRNA(Ala) + L-alanine + ATP = L-alanyl-tRNA(Ala) + AMP + diphosphate. Its function is as follows. Catalyzes the attachment of alanine to tRNA(Ala) in a two-step reaction: alanine is first activated by ATP to form Ala-AMP and then transferred to the acceptor end of tRNA(Ala). Also edits incorrectly charged Ser-tRNA(Ala) and Gly-tRNA(Ala) via its editing domain. The chain is Alanine--tRNA ligase from Desulfitobacterium hafniense (strain Y51).